Reading from the N-terminus, the 185-residue chain is Elongation factor P (185 aa).

The protein belongs to the elongation factor P family.

It is found in the cytoplasm. Its pathway is protein biosynthesis; polypeptide chain elongation. In terms of biological role, involved in peptide bond synthesis. Stimulates efficient translation and peptide-bond synthesis on native or reconstituted 70S ribosomes in vitro. Probably functions indirectly by altering the affinity of the ribosome for aminoacyl-tRNA, thus increasing their reactivity as acceptors for peptidyl transferase. This is Elongation factor P from Kosmotoga olearia (strain ATCC BAA-1733 / DSM 21960 / TBF 19.5.1).